Consider the following 95-residue polypeptide: Aspartyl/glutamyl-tRNA(Asn/Gln) amidotransferase subunit C (95 aa).

Belongs to the GatC family. Heterotrimer of A, B and C subunits.

It catalyses the reaction L-glutamyl-tRNA(Gln) + L-glutamine + ATP + H2O = L-glutaminyl-tRNA(Gln) + L-glutamate + ADP + phosphate + H(+). The enzyme catalyses L-aspartyl-tRNA(Asn) + L-glutamine + ATP + H2O = L-asparaginyl-tRNA(Asn) + L-glutamate + ADP + phosphate + 2 H(+). Allows the formation of correctly charged Asn-tRNA(Asn) or Gln-tRNA(Gln) through the transamidation of misacylated Asp-tRNA(Asn) or Glu-tRNA(Gln) in organisms which lack either or both of asparaginyl-tRNA or glutaminyl-tRNA synthetases. The reaction takes place in the presence of glutamine and ATP through an activated phospho-Asp-tRNA(Asn) or phospho-Glu-tRNA(Gln). This Campylobacter lari (strain RM2100 / D67 / ATCC BAA-1060) protein is Aspartyl/glutamyl-tRNA(Asn/Gln) amidotransferase subunit C.